The sequence spans 96 residues: Protein Vpr (96 aa).

A homooligomerization region spans residues 1 to 42 (MEQAPEDQGPQREPHNEWTLELLEELKNEAVRHFPRIWLHGL). 3 positions are modified to phosphoserine; by host: S79, S94, and S96.

Belongs to the HIV-1 VPR protein family. Homooligomer, may form homodimer. Interacts with p6-gag region of the Pr55 Gag precursor protein through a (Leu-X-X)4 motif near the C-terminus of the P6gag protein. Interacts with host UNG. May interact with host RAD23A/HHR23A. Interacts with host VPRBP/DCAF1, leading to hijack the CUL4A-RBX1-DDB1-DCAF1/VPRBP complex, mediating ubiquitination of host proteins such as TERT and ZGPAT and arrest of the cell cycle in G2 phase. In terms of processing, phosphorylated on several residues by host. These phosphorylations regulate VPR activity for the nuclear import of the HIV-1 pre-integration complex.

It localises to the virion. The protein resides in the host nucleus. It is found in the host extracellular space. Functionally, during virus entry, plays a role in the transport of the viral pre-integration (PIC) complex to the host nucleus. This function is crucial for viral infection of non-dividing macrophages. May act directly at the nuclear pore complex, by binding nucleoporins phenylalanine-glycine (FG)-repeat regions. Its function is as follows. During virus replication, may deplete host UNG protein, and incude G2-M cell cycle arrest. Acts by targeting specific host proteins for degradation by the 26S proteasome, through association with the cellular CUL4A-DDB1 E3 ligase complex by direct interaction with host VPRPB/DCAF-1. Cell cycle arrest reportedly occurs within hours of infection and is not blocked by antiviral agents, suggesting that it is initiated by the VPR carried into the virion. Additionally, VPR induces apoptosis in a cell cycle dependent manner suggesting that these two effects are mechanistically linked. Detected in the serum and cerebrospinal fluid of AIDS patient, VPR may also induce cell death to bystander cells. The protein is Protein Vpr of Homo sapiens (Human).